Reading from the N-terminus, the 395-residue chain is NAD(P)H-quinone oxidoreductase subunit H (395 aa).

The protein belongs to the complex I 49 kDa subunit family. NDH-1 can be composed of about 15 different subunits; different subcomplexes with different compositions have been identified which probably have different functions.

The protein resides in the cellular thylakoid membrane. It carries out the reaction a plastoquinone + NADH + (n+1) H(+)(in) = a plastoquinol + NAD(+) + n H(+)(out). The catalysed reaction is a plastoquinone + NADPH + (n+1) H(+)(in) = a plastoquinol + NADP(+) + n H(+)(out). Its function is as follows. NDH-1 shuttles electrons from an unknown electron donor, via FMN and iron-sulfur (Fe-S) centers, to quinones in the respiratory and/or the photosynthetic chain. The immediate electron acceptor for the enzyme in this species is believed to be plastoquinone. Couples the redox reaction to proton translocation, and thus conserves the redox energy in a proton gradient. Cyanobacterial NDH-1 also plays a role in inorganic carbon-concentration. The sequence is that of NAD(P)H-quinone oxidoreductase subunit H from Prochlorococcus marinus (strain MIT 9312).